Reading from the N-terminus, the 351-residue chain is Outer membrane protein A (351 aa).

A signal peptide spans 1-21 (MKKTAIAITVALAGFATVAQA). The next 8 membrane-spanning stretches (beta stranded) occupy residues 27–37 (TWYTGAKLGWS), 55–66 (QLGAGAFGGYQV), 70–78 (VGFEMGYDW), 96–107 (QGVQLTAKLGYP), 112–120 (LDVYTRLGG), 147–156 (PVFAGGVEWA), 161–168 (IATRLEYQ), and 187–195 (LLSLGVSYR). 4 consecutive repeat copies span residues 206–207 (AP), 208–209 (AP), 210–211 (AP), and 212–213 (AP). Residues 206–213 (APAPAPAP) form a 4 X 2 AA tandem repeats of A-P region. Residues 215-343 (VQTKHFTLKS…RVEIEVKGIK (129 aa)) enclose the OmpA-like domain. Cysteine 316 and cysteine 328 are oxidised to a cystine.

The protein belongs to the outer membrane OOP (TC 1.B.6) superfamily. OmpA family. Monomer and homodimer.

It localises to the cell outer membrane. Its function is as follows. With TolR probably plays a role in maintaining the position of the peptidoglycan cell wall in the periplasm. Acts as a porin with low permeability that allows slow penetration of small solutes; an internal gate slows down solute passage. Required for conjugation with F-type plasmids; probably serves as the mating receptor on recipient cells. This Shigella dysenteriae protein is Outer membrane protein A.